The primary structure comprises 355 residues: tRNA-specific 2-thiouridylase MnmA (355 aa).

ATP is bound by residues 6–13 and leucine 33; that span reads LLSGGVDS. Cysteine 100 (nucleophile) is an active-site residue. A disulfide bond links cysteine 100 and cysteine 195. An ATP-binding site is contributed by glycine 123. Residues 145 to 147 form an interaction with tRNA region; the sequence is KDQ. Residue cysteine 195 is the Cysteine persulfide intermediate of the active site.

This sequence belongs to the MnmA/TRMU family.

The protein localises to the cytoplasm. The catalysed reaction is S-sulfanyl-L-cysteinyl-[protein] + uridine(34) in tRNA + AH2 + ATP = 2-thiouridine(34) in tRNA + L-cysteinyl-[protein] + A + AMP + diphosphate + H(+). In terms of biological role, catalyzes the 2-thiolation of uridine at the wobble position (U34) of tRNA, leading to the formation of s(2)U34. The chain is tRNA-specific 2-thiouridylase MnmA from Borrelia garinii subsp. bavariensis (strain ATCC BAA-2496 / DSM 23469 / PBi) (Borreliella bavariensis).